A 574-amino-acid chain; its full sequence is Sulfate adenylyltransferase (574 aa).

Residues 1–169 (MSNPPHGGVL…VEAINKLNHY (169 aa)) are N-terminal. Positions 170 to 394 (DYVALRYTPA…LRESSRPRST (225 aa)) are catalytic. Q197 is a sulfate binding site. Residues 197 to 200 (QTRN) and 291 to 294 (GRDH) each bind ATP. Catalysis depends on residues T198, R199, and N200. A sulfate-binding site is contributed by R199. A295 is a sulfate binding site. An ATP-binding site is contributed by V333. Residues 395 to 574 (QGFTIFLTGY…LETEGFFDRA (180 aa)) are allosteric regulation domain; adenylyl-sulfate kinase-like. 3'-phosphoadenylyl sulfate contacts are provided by residues 434-437 (DTVR), R451, 477-478 (IA), and R516.

This sequence in the N-terminal section; belongs to the sulfate adenylyltransferase family. It in the C-terminal section; belongs to the APS kinase family. Homohexamer. Dimer of trimers.

It is found in the cytoplasm. The enzyme catalyses sulfate + ATP + H(+) = adenosine 5'-phosphosulfate + diphosphate. Its pathway is sulfur metabolism; hydrogen sulfide biosynthesis; sulfite from sulfate: step 1/3. With respect to regulation, allosterically inhibited by 3'-phosphoadenosine 5'-phosphosulfate (PAPS). Catalyzes the first intracellular reaction of sulfate assimilation, forming adenosine-5'-phosphosulfate (APS) from inorganic sulfate and ATP. Plays an important role in sulfate activation as a component of the biosynthesis pathway of sulfur-containing amino acids. The protein is Sulfate adenylyltransferase of Aspergillus clavatus (strain ATCC 1007 / CBS 513.65 / DSM 816 / NCTC 3887 / NRRL 1 / QM 1276 / 107).